A 403-amino-acid chain; its full sequence is F-box only protein 22 (403 aa).

Residue Met1 is modified to N-acetylmethionine. One can recognise an F-box domain in the interval 21-67 (FVLSNLAEVVERVLTFLPAKALLRVACVCRLWRECVRRVLRTHRSVT). Thr127 is subject to Phosphothreonine. A Phosphoserine modification is found at Ser128. The residue at position 194 (Lys194) is an N6-acetyllysine.

In terms of assembly, directly interacts with SKP1 and CUL1. Interacts (via C-terminal) with KDM4A. Interacts with TP53. Interacts with MTOR; this interaction promotes 'lys-27'-linked ubiquitination of MTOR. As to quaternary structure, (Microbial infection) Interacts with SARS_COV-2 protein NSP5; this interaction attenuates NSP5-mediated inhibition of innate immunity. Post-translationally, phosphorylated by EIF2AK4 at Thr-127 causes cytoplasmic retention of FBXO22. Predominantly expressed in liver, also enriched in cardiac muscle.

The protein resides in the cytoplasm. The protein localises to the nucleus. Its subcellular location is the myofibril. It localises to the sarcomere. It is found in the z line. In terms of biological role, substrate-recognition component of the SCF (SKP1-CUL1-F-box protein)-type E3 ubiquitin ligase complex that is implicated in the control of various cellular processes such as cell cycle control, transcriptional regulation, DNA damage repair, and apoptosis. Promotes the proteasome-dependent degradation of key sarcomeric proteins, such as alpha-actinin (ACTN2) and filamin-C (FLNC), essential for maintenance of normal contractile function. Acts as a key regulator of histone methylation marks namely H3K9 and H3K36 methylation through the regulation of histone demethylase KDM4A protein levels. In complex with KDM4A, also regulates the abundance of TP53 by targeting methylated TP53 for degradation at the late senescent stage. Under oxidative stress, promotes the ubiquitination and degradation of BACH1. Mechanistically, reactive oxygen species (ROS) covalently modify cysteine residues on the bZIP domain of BACH1, leading to its release from chromatin and making it accessible to FBXO22. Upon amino acid depletion, mediates 'Lys-27'-linked ubiquitination of MTOR and thereby inhibits substrate recruitment to mTORC1. Also inhibits SARS-CoV-2 replication by inducing NSP5 degradation. This chain is F-box only protein 22 (FBXO22), found in Homo sapiens (Human).